The following is a 515-amino-acid chain: ATP synthase subunit alpha (515 aa).

Residue 169–176 (GDRQTGKT) participates in ATP binding.

This sequence belongs to the ATPase alpha/beta chains family. As to quaternary structure, F-type ATPases have 2 components, CF(1) - the catalytic core - and CF(0) - the membrane proton channel. CF(1) has five subunits: alpha(3), beta(3), gamma(1), delta(1), epsilon(1). CF(0) has three main subunits: a(1), b(2) and c(9-12). The alpha and beta chains form an alternating ring which encloses part of the gamma chain. CF(1) is attached to CF(0) by a central stalk formed by the gamma and epsilon chains, while a peripheral stalk is formed by the delta and b chains.

It is found in the cell inner membrane. The catalysed reaction is ATP + H2O + 4 H(+)(in) = ADP + phosphate + 5 H(+)(out). Its function is as follows. Produces ATP from ADP in the presence of a proton gradient across the membrane. The alpha chain is a regulatory subunit. The chain is ATP synthase subunit alpha from Neisseria meningitidis serogroup C (strain 053442).